Reading from the N-terminus, the 428-residue chain is Pyruvate dehydrogenase E1 component subunit alpha-3, chloroplastic (428 aa).

Residues methionine 1 to serine 61 constitute a chloroplast transit peptide. Pyruvate-binding residues include histidine 115, tyrosine 141, arginine 142, alanine 190, isoleucine 192, aspartate 227, glycine 228, and asparagine 256. Tyrosine 141, arginine 142, alanine 190, isoleucine 192, aspartate 227, glycine 228, asparagine 256, and histidine 325 together coordinate thiamine diphosphate. Aspartate 227 is a binding site for Mg(2+). Residue asparagine 256 participates in Mg(2+) binding.

In terms of assembly, tetramer of 2 alpha and 2 beta subunits. Thiamine diphosphate serves as cofactor. Requires Mg(2+) as cofactor.

The protein localises to the plastid. The protein resides in the chloroplast. It carries out the reaction N(6)-[(R)-lipoyl]-L-lysyl-[protein] + pyruvate + H(+) = N(6)-[(R)-S(8)-acetyldihydrolipoyl]-L-lysyl-[protein] + CO2. The pyruvate dehydrogenase complex catalyzes the overall conversion of pyruvate to acetyl-CoA and CO(2). It contains multiple copies of three enzymatic components: pyruvate dehydrogenase (E1), dihydrolipoamide acetyltransferase (E2) and lipoamide dehydrogenase (E3). The polypeptide is Pyruvate dehydrogenase E1 component subunit alpha-3, chloroplastic (PDH-E1 ALPHA) (Arabidopsis thaliana (Mouse-ear cress)).